The sequence spans 406 residues: Phosphorylase b kinase gamma catalytic chain, liver/testis isoform (406 aa).

Positions 24-291 constitute a Protein kinase domain; sequence YDPKDVIGRG…AEQALQHPFF (268 aa). Residues 30–38 and Lys53 each bind ATP; that span reads IGRGVSSVV. The active-site Proton acceptor is the Asp153. A calmodulin-binding (domain-N) region spans residues 306–330; sequence QRFRVAVWTVLAAGRVALSTHRVRP. Ser345 is modified (phosphoserine). Residues 346–370 are calmodulin-binding (domain-C); sequence VRHLIDNCAFRLYGHWVKKGEQQNR.

The protein belongs to the protein kinase superfamily. CAMK Ser/Thr protein kinase family. In terms of assembly, hexadecamer of 4 heterotetramers, each composed of alpha, beta, gamma, and delta subunits. Alpha (PHKA1 or PHKA2) and beta (PHKB) are regulatory subunits, gamma (PHKG1 or PHKG2) is the catalytic subunit, and delta is calmodulin.

It carries out the reaction 2 ATP + phosphorylase b = 2 ADP + phosphorylase a.. Catalytic subunit of the phosphorylase b kinase (PHK), which mediates the neural and hormonal regulation of glycogen breakdown (glycogenolysis) by phosphorylating and thereby activating glycogen phosphorylase. May regulate glycogeneolysis in the testis. In vitro, phosphorylates PYGM. This chain is Phosphorylase b kinase gamma catalytic chain, liver/testis isoform (PHKG2), found in Homo sapiens (Human).